The primary structure comprises 203 residues: Holliday junction branch migration complex subunit RuvA (203 aa).

The interval 1-62 (MYEYFLGQVT…ENGMSLFGFF (62 aa)) is domain I. The domain II stretch occupies residues 63 to 141 (DADEKALFEK…DLNVDVTGQT (79 aa)). The tract at residues 142–148 (ALDVDAP) is flexible linker. Residues 149–203 (AVDGALADALAALEALGYSKADVKKVTKKLETFSQTQGADTNTLLSEGLRLLMKK) are domain III.

Belongs to the RuvA family. Homotetramer. Forms an RuvA(8)-RuvB(12)-Holliday junction (HJ) complex. HJ DNA is sandwiched between 2 RuvA tetramers; dsDNA enters through RuvA and exits via RuvB. An RuvB hexamer assembles on each DNA strand where it exits the tetramer. Each RuvB hexamer is contacted by two RuvA subunits (via domain III) on 2 adjacent RuvB subunits; this complex drives branch migration. In the full resolvosome a probable DNA-RuvA(4)-RuvB(12)-RuvC(2) complex forms which resolves the HJ.

It is found in the cytoplasm. Functionally, the RuvA-RuvB-RuvC complex processes Holliday junction (HJ) DNA during genetic recombination and DNA repair, while the RuvA-RuvB complex plays an important role in the rescue of blocked DNA replication forks via replication fork reversal (RFR). RuvA specifically binds to HJ cruciform DNA, conferring on it an open structure. The RuvB hexamer acts as an ATP-dependent pump, pulling dsDNA into and through the RuvAB complex. HJ branch migration allows RuvC to scan DNA until it finds its consensus sequence, where it cleaves and resolves the cruciform DNA. The polypeptide is Holliday junction branch migration complex subunit RuvA (Lactiplantibacillus plantarum (strain ATCC BAA-793 / NCIMB 8826 / WCFS1) (Lactobacillus plantarum)).